We begin with the raw amino-acid sequence, 393 residues long: Phosphoglycerate kinase (393 aa).

Substrate-binding positions include 21 to 23 (DFN), R37, 60 to 63 (HLGR), R119, and R152. ATP-binding positions include K202, G291, E322, and 348 to 351 (GGDT).

This sequence belongs to the phosphoglycerate kinase family. Monomer.

The protein localises to the cytoplasm. The catalysed reaction is (2R)-3-phosphoglycerate + ATP = (2R)-3-phospho-glyceroyl phosphate + ADP. Its pathway is carbohydrate degradation; glycolysis; pyruvate from D-glyceraldehyde 3-phosphate: step 2/5. In Coprothermobacter proteolyticus (strain ATCC 35245 / DSM 5265 / OCM 4 / BT), this protein is Phosphoglycerate kinase.